We begin with the raw amino-acid sequence, 82 residues long: Omega-ctenitoxin-Pn1a (82 aa).

The first 21 residues, 1–21, serve as a signal peptide directing secretion; sequence MWLKIQVFLLAITLITLGIQA. Positions 22–37 are excised as a propeptide; that stretch reads EPNSSPNNPLIEEEAR. Intrachain disulfides connect Cys-39-Cys-54, Cys-46-Cys-59, Cys-53-Cys-70, and Cys-61-Cys-68. Positions 72–82 are excised as a propeptide; that stretch reads KKFIEFFGGGK.

This sequence belongs to the neurotoxin 02 (plectoxin) family. Expressed by the venom gland.

Its subcellular location is the secreted. Antagonist of L-type calcium channels (Cav1/CACNA1). Induces immediate clockwise gyration and flaccid paralysis after 6 hours at dose levels of 5 ug per mouse. The sequence is that of Omega-ctenitoxin-Pn1a from Phoneutria nigriventer (Brazilian armed spider).